The primary structure comprises 389 residues: MIDKKNITIGIVAGEVSGDILGAGLIRALKIQYPQARFIGIAGKNMLAEGCKTLVDMEDIAVMGLVEVIKYLPRLLKIRRLVIDTMLAEKPDIFIGIDAPDFNLDIELKLKKQGIKTLHYVSPSVWAWRQKRIFKIAQATNLVLAFLPFEKAFYDRFNVPCRFVGHTMADIIDLQPDRQDACFQLNLEPKHRYVAILVGSREAEVQFLTPPFLQTAQLIKQRFPDVQFLVPLVNEKRRKQFEQIKAQIAPHLEVIFLDGQARQAMIVAEASLLASGTASLECMLCKSPMVVGYKMKPFTYFLAKRLVKTKYISLPNLLADDMLVPEMIQEDCTAEKLAEKLSVYLEQTESGIKNRQHLIQQFTQLHQLIRCDADKQAAQAVIDLLNDEV.

The protein belongs to the LpxB family.

The enzyme catalyses a lipid X + a UDP-2-N,3-O-bis[(3R)-3-hydroxyacyl]-alpha-D-glucosamine = a lipid A disaccharide + UDP + H(+). It functions in the pathway bacterial outer membrane biogenesis; LPS lipid A biosynthesis. Condensation of UDP-2,3-diacylglucosamine and 2,3-diacylglucosamine-1-phosphate to form lipid A disaccharide, a precursor of lipid A, a phosphorylated glycolipid that anchors the lipopolysaccharide to the outer membrane of the cell. The sequence is that of Lipid-A-disaccharide synthase from Histophilus somni (strain 2336) (Haemophilus somnus).